The chain runs to 114 residues: MGVMEILVSTLEAVPGYRVAQVLGVVKGSTVRSKHLGKDLLAGLRTLVGGELPEYTEMLQEAREVAEARMLEEARRLGAHAVLGVRYATASVMQGAAEILVYGTAVRLEPARER.

It belongs to the UPF0145 family.

This Thermus thermophilus (strain ATCC BAA-163 / DSM 7039 / HB27) protein is UPF0145 protein TT_C1581.